Consider the following 874-residue polypeptide: Leucine--tRNA ligase (874 aa).

The 'HIGH' region motif lies at 43-53 (PYPSGRIHIGH). The short motif at 630 to 634 (KMSKS) is the 'KMSKS' region element. Lys633 contributes to the ATP binding site.

Belongs to the class-I aminoacyl-tRNA synthetase family.

The protein resides in the cytoplasm. The catalysed reaction is tRNA(Leu) + L-leucine + ATP = L-leucyl-tRNA(Leu) + AMP + diphosphate. In Bradyrhizobium diazoefficiens (strain JCM 10833 / BCRC 13528 / IAM 13628 / NBRC 14792 / USDA 110), this protein is Leucine--tRNA ligase.